The sequence spans 245 residues: 1-(5-phosphoribosyl)-5-[(5-phosphoribosylamino)methylideneamino] imidazole-4-carboxamide isomerase (245 aa).

Aspartate 7 acts as the Proton acceptor in catalysis. Catalysis depends on aspartate 129, which acts as the Proton donor.

It belongs to the HisA/HisF family.

It is found in the cytoplasm. The catalysed reaction is 1-(5-phospho-beta-D-ribosyl)-5-[(5-phospho-beta-D-ribosylamino)methylideneamino]imidazole-4-carboxamide = 5-[(5-phospho-1-deoxy-D-ribulos-1-ylimino)methylamino]-1-(5-phospho-beta-D-ribosyl)imidazole-4-carboxamide. The protein operates within amino-acid biosynthesis; L-histidine biosynthesis; L-histidine from 5-phospho-alpha-D-ribose 1-diphosphate: step 4/9. In Shewanella piezotolerans (strain WP3 / JCM 13877), this protein is 1-(5-phosphoribosyl)-5-[(5-phosphoribosylamino)methylideneamino] imidazole-4-carboxamide isomerase.